A 366-amino-acid polypeptide reads, in one-letter code: MADNSSDYRALFLNDVPMMDARAPVEFSKGAFPGVINLPLMNDIERQKVGTCYKQHGQDAAIQLGHQLVCGQVKDERVNAWVEFAKANPDGYLYCFRGGLRSQTVQRWLKDAGVDYPRIIGGYKAMRTFLLDTLHEAVSECDIVVLGGMTSTGKTEVLTQLRNSLDLEGIANHRGSSFGKRATGQPAQIDFENRLAIDLLKKRAAGIEQFVVEDESRLVGSCNVPLELHQTMQGCPMVWLEDSFENRVERILDDYVINLCAEFITVKGEEQGFGLFAERLLQSLNNIHKRLGGERHQRLSGLMQTALEEQQRSGTVDLHRGWIEGLLGEYYDPMYAYQREHKAARIEFAGNQVDVLDYLRERSDKR.

Residues 12 to 135 form the Rhodanese domain; sequence FLNDVPMMDA…MRTFLLDTLH (124 aa). The active-site S-selanylcysteine intermediate is the Cys95.

This sequence belongs to the SelU family. In terms of assembly, monomer.

It catalyses the reaction 5-methylaminomethyl-2-thiouridine(34) in tRNA + selenophosphate + (2E)-geranyl diphosphate + H2O + H(+) = 5-methylaminomethyl-2-selenouridine(34) in tRNA + (2E)-thiogeraniol + phosphate + diphosphate. It carries out the reaction 5-methylaminomethyl-2-thiouridine(34) in tRNA + (2E)-geranyl diphosphate = 5-methylaminomethyl-S-(2E)-geranyl-thiouridine(34) in tRNA + diphosphate. The catalysed reaction is 5-methylaminomethyl-S-(2E)-geranyl-thiouridine(34) in tRNA + selenophosphate + H(+) = 5-methylaminomethyl-2-(Se-phospho)selenouridine(34) in tRNA + (2E)-thiogeraniol. The enzyme catalyses 5-methylaminomethyl-2-(Se-phospho)selenouridine(34) in tRNA + H2O = 5-methylaminomethyl-2-selenouridine(34) in tRNA + phosphate. In terms of biological role, involved in the post-transcriptional modification of the uridine at the wobble position (U34) of tRNA(Lys), tRNA(Glu) and tRNA(Gln). Catalyzes the conversion of 2-thiouridine (S2U-RNA) to 2-selenouridine (Se2U-RNA). Acts in a two-step process involving geranylation of 2-thiouridine (S2U) to S-geranyl-2-thiouridine (geS2U) and subsequent selenation of the latter derivative to 2-selenouridine (Se2U) in the tRNA chain. The polypeptide is tRNA 2-selenouridine synthase (Pseudomonas savastanoi pv. phaseolicola (strain 1448A / Race 6) (Pseudomonas syringae pv. phaseolicola (strain 1448A / Race 6))).